The sequence spans 385 residues: 1-deoxy-D-xylulose 5-phosphate reductoisomerase (385 aa).

Residues threonine 13, glycine 14, serine 15, isoleucine 16, asparagine 40, and asparagine 122 each contribute to the NADPH site. Lysine 123 contacts 1-deoxy-D-xylulose 5-phosphate. An NADPH-binding site is contributed by glutamate 124. A Mn(2+)-binding site is contributed by aspartate 148. Serine 149, glutamate 150, serine 177, and histidine 200 together coordinate 1-deoxy-D-xylulose 5-phosphate. Glutamate 150 contributes to the Mn(2+) binding site. NADPH is bound at residue glycine 206. Residues serine 213, asparagine 218, lysine 219, and glutamate 222 each contribute to the 1-deoxy-D-xylulose 5-phosphate site. Glutamate 222 contacts Mn(2+).

Belongs to the DXR family. It depends on Mg(2+) as a cofactor. The cofactor is Mn(2+).

The enzyme catalyses 2-C-methyl-D-erythritol 4-phosphate + NADP(+) = 1-deoxy-D-xylulose 5-phosphate + NADPH + H(+). Its pathway is isoprenoid biosynthesis; isopentenyl diphosphate biosynthesis via DXP pathway; isopentenyl diphosphate from 1-deoxy-D-xylulose 5-phosphate: step 1/6. Functionally, catalyzes the NADPH-dependent rearrangement and reduction of 1-deoxy-D-xylulose-5-phosphate (DXP) to 2-C-methyl-D-erythritol 4-phosphate (MEP). This chain is 1-deoxy-D-xylulose 5-phosphate reductoisomerase, found in Francisella tularensis subsp. tularensis (strain WY96-3418).